A 355-amino-acid polypeptide reads, in one-letter code: 4-dimethylallyltryptophan N-methyltransferase easF (355 aa).

This sequence belongs to the methyltransferase superfamily. As to quaternary structure, homodimer.

It carries out the reaction 4-(3-methylbut-2-enyl)-L-tryptophan + S-adenosyl-L-methionine = 4-(3-methylbut-2-enyl)-L-abrine + S-adenosyl-L-homocysteine + H(+). Its pathway is alkaloid biosynthesis; ergot alkaloid biosynthesis. Its function is as follows. 4-dimethylallyltryptophan N-methyltransferase; part of the gene cluster that mediates the biosynthesis of fungal ergot alkaloid. DmaW catalyzes the first step of ergot alkaloid biosynthesis by condensing dimethylallyl diphosphate (DMAP) and tryptophan to form 4-dimethylallyl-L-tryptophan. The second step is catalyzed by the methyltransferase easF that methylates 4-dimethylallyl-L-tryptophan in the presence of S-adenosyl-L-methionine, resulting in the formation of 4-dimethylallyl-L-abrine. The catalase easC and the FAD-dependent oxidoreductase easE then transform 4-dimethylallyl-L-abrine to chanoclavine-I which is further oxidized by easD in the presence of NAD(+), resulting in the formation of chanoclavine-I aldehyde. Agroclavine dehydrogenase easG then mediates the conversion of chanoclavine-I aldehyde to agroclavine via a non-enzymatic adduct reaction: the substrate is an iminium intermediate that is formed spontaneously from chanoclavine-I aldehyde in the presence of glutathione. Further conversion of agroclavine to paspalic acid is a two-step process involving oxidation of agroclavine to elymoclavine and of elymoclavine to paspalic acid, the second step being performed by the elymoclavine oxidase cloA. However, cloA does not encode a functional enzyme indicating that C.fusiformis terminates its ergot alkaloid pathway at elymoclavine. This Claviceps fusiformis (Ergot fungus) protein is 4-dimethylallyltryptophan N-methyltransferase easF.